The following is a 61-amino-acid chain: MARKALIEKWNKTPKHSTRAYTRCRICGRPHAVLKKYGICRICFRELAYKGEIPGCKKASW.

Cys24, Cys27, Cys40, and Cys43 together coordinate Zn(2+).

This sequence belongs to the universal ribosomal protein uS14 family. Zinc-binding uS14 subfamily. As to quaternary structure, part of the 30S ribosomal subunit. Contacts proteins S3 and S10. Zn(2+) is required as a cofactor.

In terms of biological role, binds 16S rRNA, required for the assembly of 30S particles and may also be responsible for determining the conformation of the 16S rRNA at the A site. This is Small ribosomal subunit protein uS14 from Clostridium botulinum (strain ATCC 19397 / Type A).